Here is a 429-residue protein sequence, read N- to C-terminus: Adenylosuccinate synthetase (429 aa).

GTP-binding positions include 12-18 (GDEGKGK) and 40-42 (GHT). Catalysis depends on D13, which acts as the Proton acceptor. Positions 13 and 40 each coordinate Mg(2+). Residues 13–16 (DEGK), 38–41 (NAGH), T129, R143, Q223, T238, and R302 each bind IMP. The active-site Proton donor is the H41. Substrate is bound at residue 298 to 304 (TVTGRPR). Residues R304, 330 to 332 (KLD), and 412 to 414 (STS) each bind GTP.

Belongs to the adenylosuccinate synthetase family. In terms of assembly, homodimer. Requires Mg(2+) as cofactor.

It localises to the cytoplasm. It catalyses the reaction IMP + L-aspartate + GTP = N(6)-(1,2-dicarboxyethyl)-AMP + GDP + phosphate + 2 H(+). It participates in purine metabolism; AMP biosynthesis via de novo pathway; AMP from IMP: step 1/2. Functionally, plays an important role in the de novo pathway of purine nucleotide biosynthesis. Catalyzes the first committed step in the biosynthesis of AMP from IMP. The protein is Adenylosuccinate synthetase of Rhodospirillum rubrum (strain ATCC 11170 / ATH 1.1.1 / DSM 467 / LMG 4362 / NCIMB 8255 / S1).